Consider the following 349-residue polypeptide: tRNA pseudouridine synthase D (349 aa).

Substrate is bound at residue Phe27. Asp80 acts as the Nucleophile in catalysis. A substrate-binding site is contributed by Asn129. The region spanning 155-303 is the TRUD domain; sequence GVPNYFGAQR…VEASRRAMLL (149 aa). Phe329 contacts substrate.

The protein belongs to the pseudouridine synthase TruD family.

The enzyme catalyses uridine(13) in tRNA = pseudouridine(13) in tRNA. Functionally, responsible for synthesis of pseudouridine from uracil-13 in transfer RNAs. The sequence is that of tRNA pseudouridine synthase D from Salmonella typhi.